The sequence spans 207 residues: Ribonuclease HII (207 aa).

Residues 18 to 207 (TYLSGSDEAG…PIKKISKETS (190 aa)) form the RNase H type-2 domain. A divalent metal cation-binding residues include Asp24, Glu25, and Asp116.

This sequence belongs to the RNase HII family. The cofactor is Mn(2+). It depends on Mg(2+) as a cofactor.

It is found in the cytoplasm. The enzyme catalyses Endonucleolytic cleavage to 5'-phosphomonoester.. In terms of biological role, endonuclease that specifically degrades the RNA of RNA-DNA hybrids. The polypeptide is Ribonuclease HII (Mycoplasma mycoides subsp. mycoides SC (strain CCUG 32753 / NCTC 10114 / PG1)).